Reading from the N-terminus, the 44-residue chain is NNFYSYNAFITAAKSFPGFGTTGDTAVRGPIQISYNYNYGPCGR.

This sequence belongs to the glycosyl hydrolase 19 family. Chitinase class I subfamily.

It catalyses the reaction Random endo-hydrolysis of N-acetyl-beta-D-glucosaminide (1-&gt;4)-beta-linkages in chitin and chitodextrins.. In terms of biological role, defense against chitin-containing fungal pathogens. This chain is Endochitinase 1, found in Capsicum chinense (Scotch bonnet).